The following is a 117-amino-acid chain: Small ribosomal subunit protein uS17 (117 aa).

It belongs to the universal ribosomal protein uS17 family. As to quaternary structure, part of the 30S ribosomal subunit.

Its function is as follows. One of the primary rRNA binding proteins, it binds specifically to the 5'-end of 16S ribosomal RNA. The polypeptide is Small ribosomal subunit protein uS17 (Methanocaldococcus jannaschii (strain ATCC 43067 / DSM 2661 / JAL-1 / JCM 10045 / NBRC 100440) (Methanococcus jannaschii)).